Reading from the N-terminus, the 308-residue chain is Phosphate transport system permease protein PstA 1 (308 aa).

The next 6 membrane-spanning stretches (helical) occupy residues 36-56 (FFFT…WVVI), 96-116 (AGVA…YLVE), 132-152 (VLAG…WIAT), 155-175 (FQQS…PVVV), 204-224 (IVRI…LLSI), and 276-296 (WGAA…AAMI). The region spanning 89–297 (LYGTLVQAGV…TINLAAAMIR (209 aa)) is the ABC transmembrane type-1 domain.

This sequence belongs to the binding-protein-dependent transport system permease family. CysTW subfamily. As to quaternary structure, the complex is composed of two ATP-binding proteins (PstB), two transmembrane proteins (PstC and PstA) and a solute-binding protein (PstS).

The protein localises to the cell membrane. Part of the binding-protein-dependent transport system for phosphate; probably responsible for the translocation of the substrate across the membrane. This is Phosphate transport system permease protein PstA 1 (pstA1) from Mycobacterium tuberculosis (strain ATCC 25618 / H37Rv).